The chain runs to 797 residues: MKTRGFSFPRQRQVLFLFLFWGVSLAGSGFGRYSVTEETEKGSFVVNLAKDLGLAEGELAARGTRVVSDDNKQYLLLDSHTGNLLTNEKLDREKLCGPKEPCMLYFQILMDDPFQIYRAELRVRDINDHSPVFRHKEMVLKISENTAEGTAFRLERAQDPDEGHNSIQNYTISSNSFFHIKISGSDEGMIYPELVLDKALDREEQEELSLTLTALDGGSPSRSGTSTIRIVVLDVNDNVPQFAQALYETQAPENSPVGSLIVKVSAGDADSGVNAEVSYSFFDASEDILTTFQINPFSGEIFLRELLDYELVNSYKINIQAMDGGGLSARCTVLIKVLDSNDNPPELIISSLSNSVAENSPGIVLAVFKIKDRDSGENGKTICYVQDNLPFFLKPSVDNFYILMTEGALDRESKAEYNITITVTDLGTPRLKTEHSITLQVSDVNDNAPAFTQTSYTLFVRENNSPALHIGSVSATDRDSGTNAQVTYSLLPPQDPHLPLASLVSINADNGHLFALRSLDYEALQAFDFRVGASDRGSPALSSEALVRVLVLDANDNSPFVLYPLQNGSAPCTELVPRAAEPGYLVTKVVAVDGDSGQNAWLSYQLLKATEPGLFGVWAHNGEVRTARLLSERDAAKHRLVVLVKDNGEPPRSATATLHVLLVDGFSQPYLPLPEAAPAQAQADLLTVYLVVALASVSSLFLLSVLLFVAVRLCRRSRAASVGRCSVPEGPFPGHLVDVSGTGTLFQSYQYEVCLTGGSETGEFKFLKPITPHLPPHRGGKEIEENSTLPNSFGFNY.

Residues 1–26 (MKTRGFSFPRQRQVLFLFLFWGVSLA) form the signal peptide. Residues 27–690 (GSGFGRYSVT…AQADLLTVYL (664 aa)) are Extracellular-facing. Cadherin domains are found at residues 35-133 (VTEE…SPVF), 138-242 (MVLK…VPQF), 247-347 (YETQ…PPEL), 352-451 (LSNS…APAF), and 456-561 (YTLF…SPFV). An N-linked (GlcNAc...) asparagine glycan is attached at N169. The N-linked (GlcNAc...) asparagine glycan is linked to N418. N-linked (GlcNAc...) asparagine glycosylation is present at N567. The Cadherin 6 domain maps to 568–671 (GSAPCTELVP…LVDGFSQPYL (104 aa)). A helical transmembrane segment spans residues 691–711 (VVALASVSSLFLLSVLLFVAV). Residues 712 to 797 (RLCRRSRAAS…TLPNSFGFNY (86 aa)) lie on the Cytoplasmic side of the membrane. The disordered stretch occupies residues 777-797 (HRGGKEIEENSTLPNSFGFNY). The segment covering 786-797 (NSTLPNSFGFNY) has biased composition (polar residues).

It is found in the cell membrane. Potential calcium-dependent cell-adhesion protein. May be involved in the establishment and maintenance of specific neuronal connections in the brain. The chain is Protocadherin beta-9 (PCDHB9) from Homo sapiens (Human).